Here is a 367-residue protein sequence, read N- to C-terminus: Anhydro-N-acetylmuramic acid kinase (367 aa).

13–20 (GTSMDGAD) lines the ATP pocket.

Belongs to the anhydro-N-acetylmuramic acid kinase family.

The enzyme catalyses 1,6-anhydro-N-acetyl-beta-muramate + ATP + H2O = N-acetyl-D-muramate 6-phosphate + ADP + H(+). It functions in the pathway amino-sugar metabolism; 1,6-anhydro-N-acetylmuramate degradation. It participates in cell wall biogenesis; peptidoglycan recycling. Functionally, catalyzes the specific phosphorylation of 1,6-anhydro-N-acetylmuramic acid (anhMurNAc) with the simultaneous cleavage of the 1,6-anhydro ring, generating MurNAc-6-P. Is required for the utilization of anhMurNAc either imported from the medium or derived from its own cell wall murein, and thus plays a role in cell wall recycling. The polypeptide is Anhydro-N-acetylmuramic acid kinase (Neisseria meningitidis serogroup A / serotype 4A (strain DSM 15465 / Z2491)).